The chain runs to 221 residues: uncharacterized protein (221 aa).

The next 4 helical transmembrane spans lie at 41-63, 78-100, 141-163, and 178-200; these read TGNI…HSLI, AVMY…SSLS, ILAY…ISFL, and LILR…VNLF.

It is found in the cell membrane. This is an uncharacterized protein from Archaeoglobus fulgidus (strain ATCC 49558 / DSM 4304 / JCM 9628 / NBRC 100126 / VC-16).